Here is a 304-residue protein sequence, read N- to C-terminus: L-lactate dehydrogenase (304 aa).

Residues Val11, Asp32, Arg37, and 76-77 (GA) contribute to the NAD(+) site. Substrate contacts are provided by residues Gln79, Arg85, and 117–120 (NPVD). Ser138 serves as a coordination point for NAD(+). Residue 143-146 (DSAR) participates in substrate binding. Positions 148 and 163 each coordinate beta-D-fructose 1,6-bisphosphate. His170 functions as the Proton acceptor in the catalytic mechanism. Thr225 contributes to the substrate binding site.

The protein belongs to the LDH/MDH superfamily. LDH family. In terms of assembly, homotetramer.

The protein localises to the cytoplasm. The enzyme catalyses (S)-lactate + NAD(+) = pyruvate + NADH + H(+). Its pathway is fermentation; pyruvate fermentation to lactate; (S)-lactate from pyruvate: step 1/1. With respect to regulation, allosterically activated by fructose 1,6-bisphosphate (FBP). In terms of biological role, catalyzes the conversion of lactate to pyruvate. The protein is L-lactate dehydrogenase of Deinococcus radiodurans (strain ATCC 13939 / DSM 20539 / JCM 16871 / CCUG 27074 / LMG 4051 / NBRC 15346 / NCIMB 9279 / VKM B-1422 / R1).